Here is a 161-residue protein sequence, read N- to C-terminus: Lipid droplet assembly factor 1 (161 aa).

Topologically, residues 1 to 43 (MAEEEPSSVSRDLQELQRKLGLLLESFQNNSKVVAFMKSPVGR) are cytoplasmic. Residues 44–61 (FLDRHPFLVLTVLMFVTM) traverse the membrane as a helical segment. Residues 62 to 67 (SAIPVG) are Lumenal-facing. A helical membrane pass occupies residues 68 to 87 (FFLLIVVLTSLGALMGAILL). The Cytoplasmic portion of the chain corresponds to 88–93 (EGLVIS). A helical transmembrane segment spans residues 94–110 (VCGLSLLCILCGLGFVS). At 111–116 (LALSGI) the chain is on the lumenal side. The helical transmembrane segment at 117–133 (TMMSYVVVSCLMSYWFS) threads the bilayer. At 134 to 161 (PSRPPTQQHANIDSQLAMKFTESEKLGL) the chain is on the cytoplasmic side.

It belongs to the LDAF1 family. In terms of assembly, interacts with BSCL2/seipin to form an oligomeric complex.

It is found in the endoplasmic reticulum membrane. Its subcellular location is the lipid droplet. Its function is as follows. Plays an important role in the formation of lipid droplets (LD) which are storage organelles at the center of lipid and energy homeostasis. In association with BSCL2/seipin, defines the sites of LD formation in the endoplasmic reticulum. This is Lipid droplet assembly factor 1 from Rattus norvegicus (Rat).